Here is a 272-residue protein sequence, read N- to C-terminus: Nitrogenase iron protein (272 aa).

8–15 (GKGGIGKS) provides a ligand contact to ATP. A [4Fe-4S] cluster-binding site is contributed by Cys-94. Arg-97 is subject to ADP-ribosylarginine; by dinitrogenase reductase ADP-ribosyltransferase. Cys-129 is a binding site for [4Fe-4S] cluster.

This sequence belongs to the NifH/BchL/ChlL family. As to quaternary structure, homodimer. It depends on [4Fe-4S] cluster as a cofactor. In terms of processing, the reversible ADP-ribosylation of Arg-97 inactivates the nitrogenase reductase and regulates nitrogenase activity.

It catalyses the reaction N2 + 8 reduced [2Fe-2S]-[ferredoxin] + 16 ATP + 16 H2O = H2 + 8 oxidized [2Fe-2S]-[ferredoxin] + 2 NH4(+) + 16 ADP + 16 phosphate + 6 H(+). Its function is as follows. The key enzymatic reactions in nitrogen fixation are catalyzed by the nitrogenase complex, which has 2 components: the iron protein and the molybdenum-iron protein. The polypeptide is Nitrogenase iron protein (Clostridium acetobutylicum (strain ATCC 824 / DSM 792 / JCM 1419 / IAM 19013 / LMG 5710 / NBRC 13948 / NRRL B-527 / VKM B-1787 / 2291 / W)).